The chain runs to 162 residues: NADH-quinone oxidoreductase subunit I (162 aa).

4Fe-4S ferredoxin-type domains follow at residues 52–82 (LRRY…IEAG) and 93–122 (TRYD…EGPN). [4Fe-4S] cluster is bound by residues Cys-62, Cys-65, Cys-68, Cys-72, Cys-102, Cys-105, Cys-108, and Cys-112.

This sequence belongs to the complex I 23 kDa subunit family. NDH-1 is composed of 14 different subunits. Subunits NuoA, H, J, K, L, M, N constitute the membrane sector of the complex. It depends on [4Fe-4S] cluster as a cofactor.

The protein resides in the cell inner membrane. The enzyme catalyses a quinone + NADH + 5 H(+)(in) = a quinol + NAD(+) + 4 H(+)(out). Its function is as follows. NDH-1 shuttles electrons from NADH, via FMN and iron-sulfur (Fe-S) centers, to quinones in the respiratory chain. The immediate electron acceptor for the enzyme in this species is believed to be ubiquinone. Couples the redox reaction to proton translocation (for every two electrons transferred, four hydrogen ions are translocated across the cytoplasmic membrane), and thus conserves the redox energy in a proton gradient. This is NADH-quinone oxidoreductase subunit I from Methylobacterium radiotolerans (strain ATCC 27329 / DSM 1819 / JCM 2831 / NBRC 15690 / NCIMB 10815 / 0-1).